The following is a 123-amino-acid chain: Small ribosomal subunit protein uS12 (123 aa).

Asp-89 is subject to 3-methylthioaspartic acid.

It belongs to the universal ribosomal protein uS12 family. Part of the 30S ribosomal subunit. Contacts proteins S8 and S17. May interact with IF1 in the 30S initiation complex.

With S4 and S5 plays an important role in translational accuracy. In terms of biological role, interacts with and stabilizes bases of the 16S rRNA that are involved in tRNA selection in the A site and with the mRNA backbone. Located at the interface of the 30S and 50S subunits, it traverses the body of the 30S subunit contacting proteins on the other side and probably holding the rRNA structure together. The combined cluster of proteins S8, S12 and S17 appears to hold together the shoulder and platform of the 30S subunit. This is Small ribosomal subunit protein uS12 from Anaeromyxobacter dehalogenans (strain 2CP-1 / ATCC BAA-258).